The sequence spans 508 residues: Lysine--tRNA ligase (508 aa).

Mg(2+) is bound by residues glutamate 418 and glutamate 425.

It belongs to the class-II aminoacyl-tRNA synthetase family. As to quaternary structure, homodimer. Requires Mg(2+) as cofactor.

It is found in the cytoplasm. The enzyme catalyses tRNA(Lys) + L-lysine + ATP = L-lysyl-tRNA(Lys) + AMP + diphosphate. This is Lysine--tRNA ligase from Burkholderia mallei (strain NCTC 10247).